We begin with the raw amino-acid sequence, 262 residues long: Adenosylcobinamide-GDP ribazoletransferase (262 aa).

Helical transmembrane passes span 11–31 (LNLFFVATGFFTRLPTPSWVI), 43–63 (YFGLVGLLIGLICALVYWFTQ), 66–86 (LPTSVAVLLAMVAGVLVTGGF), 121–141 (AIVLALILLLRWQLLVELALF), 146–166 (AITGFIVAHTLSRVLAASLIF), and 199–219 (IFVLFWLNGLAAFVLFISLWA).

The protein belongs to the CobS family. Mg(2+) serves as cofactor.

It is found in the cell inner membrane. It catalyses the reaction alpha-ribazole + adenosylcob(III)inamide-GDP = adenosylcob(III)alamin + GMP + H(+). The catalysed reaction is alpha-ribazole 5'-phosphate + adenosylcob(III)inamide-GDP = adenosylcob(III)alamin 5'-phosphate + GMP + H(+). It participates in cofactor biosynthesis; adenosylcobalamin biosynthesis; adenosylcobalamin from cob(II)yrinate a,c-diamide: step 7/7. Its function is as follows. Joins adenosylcobinamide-GDP and alpha-ribazole to generate adenosylcobalamin (Ado-cobalamin). Also synthesizes adenosylcobalamin 5'-phosphate from adenosylcobinamide-GDP and alpha-ribazole 5'-phosphate. In Shewanella denitrificans (strain OS217 / ATCC BAA-1090 / DSM 15013), this protein is Adenosylcobinamide-GDP ribazoletransferase.